A 201-amino-acid polypeptide reads, in one-letter code: NADH-quinone oxidoreductase subunit C (201 aa).

This sequence belongs to the complex I 30 kDa subunit family. In terms of assembly, NDH-1 is composed of 14 different subunits. Subunits NuoB, C, D, E, F, and G constitute the peripheral sector of the complex.

The protein localises to the cell inner membrane. It catalyses the reaction a quinone + NADH + 5 H(+)(in) = a quinol + NAD(+) + 4 H(+)(out). Functionally, NDH-1 shuttles electrons from NADH, via FMN and iron-sulfur (Fe-S) centers, to quinones in the respiratory chain. The immediate electron acceptor for the enzyme in this species is believed to be ubiquinone. Couples the redox reaction to proton translocation (for every two electrons transferred, four hydrogen ions are translocated across the cytoplasmic membrane), and thus conserves the redox energy in a proton gradient. The polypeptide is NADH-quinone oxidoreductase subunit C (Aromatoleum aromaticum (strain DSM 19018 / LMG 30748 / EbN1) (Azoarcus sp. (strain EbN1))).